Consider the following 107-residue polypeptide: Glutaredoxin 4 (107 aa).

Residues 4 to 106 (LDKIKKQISE…TLLAEVAAKH (103 aa)) form the Glutaredoxin domain. Residue lysine 21 coordinates glutathione. Cysteine 29 serves as a coordination point for [2Fe-2S] cluster. Glutathione is bound by residues arginine 58, phenylalanine 70, and 83–84 (CD).

It belongs to the glutaredoxin family. Monothiol subfamily. Homodimer.

The protein resides in the cytoplasm. In terms of biological role, monothiol glutaredoxin involved in the biogenesis of iron-sulfur clusters. The sequence is that of Glutaredoxin 4 (grxD) from Haemophilus influenzae (strain 86-028NP).